The sequence spans 65 residues: Large ribosomal subunit protein bL35 (65 aa).

Basic residues predominate over residues 1 to 10; sequence MPKMKSKSSA. Residues 1 to 21 form a disordered region; it reads MPKMKSKSSAKMRFSVRAGGT.

The protein belongs to the bacterial ribosomal protein bL35 family.

This Polynucleobacter necessarius subsp. necessarius (strain STIR1) protein is Large ribosomal subunit protein bL35.